The sequence spans 730 residues: Heterogeneous nuclear ribonucleoprotein M (730 aa).

The span at methionine 1–alanine 13 shows a compositional bias: low complexity. The tract at residues methionine 1–glutamate 62 is disordered. The residue at position 2 (alanine 2) is an N-acetylalanine. Residue lysine 17 forms a Glycyl lysine isopeptide (Lys-Gly) (interchain with G-Cter in SUMO2) linkage. Position 29 is a phosphoserine (serine 29). Lysine 37 is covalently cross-linked (Glycyl lysine isopeptide (Lys-Gly) (interchain with G-Cter in SUMO2)). Basic and acidic residues predominate over residues glycine 38–lysine 50. Glycyl lysine isopeptide (Lys-Gly) (interchain with G-Cter in SUMO2) cross-links involve residues lysine 69 and lysine 83. 2 RRM domains span residues tyrosine 71 to aspartate 149 and serine 204 to arginine 281. Serine 86 is subject to Phosphoserine. Glycyl lysine isopeptide (Lys-Gly) (interchain with G-Cter in SUMO2) cross-links involve residues lysine 88 and lysine 127. Lysine 134 is modified (N6-acetyllysine; alternate). A Glycyl lysine isopeptide (Lys-Gly) (interchain with G-Cter in SUMO2); alternate cross-link involves residue lysine 134. Glycyl lysine isopeptide (Lys-Gly) (interchain with G-Cter in SUMO2) cross-links involve residues lysine 143 and lysine 145. Residue serine 204 is modified to Phosphoserine. A Glycyl lysine isopeptide (Lys-Gly) (interchain with G-Cter in SUMO2) cross-link involves residue lysine 221. Lysine 277 bears the N6-acetyllysine; alternate mark. Residue lysine 277 forms a Glycyl lysine isopeptide (Lys-Gly) (interchain with G-Cter in SUMO2); alternate linkage. Residues lysine 285 and lysine 345 each participate in a glycyl lysine isopeptide (Lys-Gly) (interchain with G-Cter in SUMO2) cross-link. A phosphoserine mark is found at serine 365 and serine 377. Residues lysine 381 and lysine 388 each participate in a glycyl lysine isopeptide (Lys-Gly) (interchain with G-Cter in SUMO2) cross-link. At serine 397 the chain carries Phosphoserine. 4 tandem repeats follow at residues glycine 400–glycine 405, glycine 407–glycine 412, glycine 415–glycine 420, and glycine 426–glycine 431. Residues glycine 400–glycine 608 form a 27 X 6 AA repeats of [GEVSTPAN]-[ILMV]-[DE]-[RH]-[MLVI]-[GAV] region. Residue serine 432 is modified to Phosphoserine. A run of 3 repeats spans residues glutamate 433–glycine 438, valine 440–glycine 445, and serine 446–glycine 451. Serine 452 bears the Phosphoserine mark. A run of 4 repeats spans residues glycine 453–glycine 458, glycine 461–alanine 466, serine 468–glycine 473, and threonine 475–glycine 480. Phosphoserine is present on serine 468. Serine 481 carries the post-translational modification Phosphoserine. Repeat copies occupy residues glycine 482 to glycine 487, glycine 493 to alanine 498, proline 500 to glycine 505, threonine 507 to glycine 512, glycine 514 to glycine 519, alanine 521 to glycine 526, serine 528 to valine 533, glycine 540 to glycine 545, valine 547 to alanine 552, glycine 554 to glycine 559, asparagine 562 to methionine 566, glycine 567 to glycine 572, serine 575 to methionine 579, glycine 580 to glycine 585, serine 588 to glycine 593, and glycine 603 to glycine 608. Arginine 496 carries the omega-N-methylarginine modification. Serine 528 is modified (phosphoserine). Residue serine 575 is modified to Phosphoserine. Serine 588 carries the post-translational modification Phosphoserine. Serine 618, serine 633, and serine 637 each carry phosphoserine. A Glycyl lysine isopeptide (Lys-Gly) (interchain with G-Cter in SUMO2) cross-link involves residue lysine 651. In terms of domain architecture, RRM 3 spans cysteine 653 to asparagine 729. Threonine 665 is modified (phosphothreonine). Lysine 667 participates in a covalent cross-link: Glycyl lysine isopeptide (Lys-Gly) (interchain with G-Cter in SUMO2). Lysine 672 bears the N6-acetyllysine mark. Residues lysine 685 and lysine 692 each participate in a glycyl lysine isopeptide (Lys-Gly) (interchain with G-Cter in SUMO2) cross-link. Lysine 698 is subject to N6-acetyllysine; alternate. Lysine 698 is covalently cross-linked (Glycyl lysine isopeptide (Lys-Gly) (interchain with G-Cter in SUMO2); alternate). Residue lysine 698 forms a Glycyl lysine isopeptide (Lys-Gly) (interchain with G-Cter in SUMO1); alternate linkage. Position 701 is a phosphoserine (serine 701). A Glycyl lysine isopeptide (Lys-Gly) (interchain with G-Cter in SUMO2) cross-link involves residue lysine 716.

In terms of assembly, identified in the spliceosome C complex. Interacts with PPIA/CYPA. Sumoylated.

It localises to the nucleus. The protein localises to the nucleolus. Functionally, pre-mRNA binding protein in vivo, binds avidly to poly(G) and poly(U) RNA homopolymers in vitro. Involved in splicing. Acts as a receptor for carcinoembryonic antigen in Kupffer cells, may initiate a series of signaling events leading to tyrosine phosphorylation of proteins and induction of IL-1 alpha, IL-6, IL-10 and tumor necrosis factor alpha cytokines. This is Heterogeneous nuclear ribonucleoprotein M (HNRNPM) from Homo sapiens (Human).